The primary structure comprises 820 residues: Protein bicaudal D homolog 2 (820 aa).

Residue serine 2 is modified to N-acetylserine. The stretch at 20 to 270 forms a coiled coil; that stretch reads EWLRAEVKRL…LSHYMSINDS (251 aa). Residues 25–400 form an interaction with DYNLL1, DYNC1H1, DYNC1I2, DCTN1 and DCTN2 region; it reads EVKRLSHELA…RLTENLSALR (376 aa). A phosphoserine mark is found at serine 190, serine 224, and serine 320. The interval 313 to 332 is disordered; sequence SSLDNKTSTPRKDGLAPPSP. A Phosphothreonine modification is found at threonine 321. The interval 336–595 is interaction with KIF5A; the sequence is SDLLSELHIS…LLATEVGRAD (260 aa). Residues 340–539 are a coiled coil; that stretch reads SELHISEIQK…VTFSEELANL (200 aa). A phosphoserine mark is found at serine 345 and serine 397. 4 disordered regions span residues 400-427, 563-582, 591-618, and 799-820; these read RRLQ…GDYY, QGKA…PVLL, VGRA…DPRR, and HEQT…SPSL. Basic and acidic residues predominate over residues 404-424; sequence AGKERQTSLDNEKDRDSHEDG. Phosphoserine is present on residues serine 570 and serine 578. The interaction with RANBP2 stretch occupies residues 586–820; the sequence is LLATEVGRAD…SKAKPASPSL (235 aa). Position 598 is a phosphothreonine (threonine 598). Residues 602–614 are compositionally biased toward low complexity; that stretch reads SPSPSSSLPSPLS. Residues 662-804 adopt a coiled-coil conformation; that stretch reads DKDKEALMEE…LELDHEQTRR (143 aa). The interval 662 to 810 is interaction with RAB6A; it reads DKDKEALMEE…QTRRGRSKAA (149 aa). Serine 819 is modified (phosphoserine).

This sequence belongs to the BicD family. As to quaternary structure, part of a tripartite complex with dynein and dynactin, acts an adapter linking the dynein motor complex and dynactin. Interacts with CPNE4 (via VWFA domain). Interacts with NEK9. Interacts with DCTN2. Interacts with RAB6A. Interacts with DNAI1. Interacts with DYNLL1, DYNC1H1, DYNC1I2 and DCTN1. Forms a complex with dynein and dynactin. The dynein-dynactin-BICD2 ternary complex (DDB) binds preferentially to tyrosinated microtubules than to detyrosinated microtubules. Interacts with RANBP2, RAB6A and KIF5A. Interacts with KIF1C. Phosphorylated by NEK9 in vitro. Ubiquitously expressed with high expression in the spinal cord.

It localises to the golgi apparatus. The protein localises to the cytoplasm. The protein resides in the cytoskeleton. Its subcellular location is the nucleus. It is found in the nuclear pore complex. It localises to the nucleus envelope. In terms of biological role, acts as an adapter protein linking the dynein motor complex to various cargos and converts dynein from a non-processive to a highly processive motor in the presence of dynactin. Facilitates and stabilizes the interaction between dynein and dynactin and activates dynein processivity (the ability to move along a microtubule for a long distance without falling off the track). Facilitates the binding of RAB6A to the Golgi by stabilizing its GTP-bound form. Regulates coat complex coatomer protein I (COPI)-independent Golgi-endoplasmic reticulum transport via its interaction with RAB6A and recruitment of the dynein-dynactin motor complex. Contributes to nuclear and centrosomal positioning prior to mitotic entry through regulation of both dynein and kinesin-1. During G2 phase of the cell cycle, associates with RANBP2 at the nuclear pores and recruits dynein and dynactin to the nuclear envelope to ensure proper positioning of the nucleus relative to centrosomes prior to the onset of mitosis. This is Protein bicaudal D homolog 2 (Bicd2) from Mus musculus (Mouse).